The following is a 497-amino-acid chain: tRNA-2-methylthio-N(6)-dimethylallyladenosine synthase (497 aa).

The interval 1–48 (MTGTSNIPTHGKEHKDAPALLPLPAPNTHHTHAAHPGDPSHDRHPSRG) is disordered. Low complexity predominate over residues 18 to 28 (PALLPLPAPNT). One can recognise an MTTase N-terminal domain in the interval 48 to 165 (GKLFIKTHGC…LPDMIRARRE (118 aa)). 6 residues coordinate [4Fe-4S] cluster: cysteine 57, cysteine 94, cysteine 128, cysteine 202, cysteine 206, and cysteine 209. A Radical SAM core domain is found at 188 to 430 (RAEGPSAFVS…QKHINAYAAD (243 aa)). The TRAM domain maps to 433–496 (KRMIGTVQTV…TNSLRGRVHT (64 aa)).

The protein belongs to the methylthiotransferase family. MiaB subfamily. As to quaternary structure, monomer. Requires [4Fe-4S] cluster as cofactor.

The protein resides in the cytoplasm. It catalyses the reaction N(6)-dimethylallyladenosine(37) in tRNA + (sulfur carrier)-SH + AH2 + 2 S-adenosyl-L-methionine = 2-methylsulfanyl-N(6)-dimethylallyladenosine(37) in tRNA + (sulfur carrier)-H + 5'-deoxyadenosine + L-methionine + A + S-adenosyl-L-homocysteine + 2 H(+). Its function is as follows. Catalyzes the methylthiolation of N6-(dimethylallyl)adenosine (i(6)A), leading to the formation of 2-methylthio-N6-(dimethylallyl)adenosine (ms(2)i(6)A) at position 37 in tRNAs that read codons beginning with uridine. In Xylella fastidiosa (strain M23), this protein is tRNA-2-methylthio-N(6)-dimethylallyladenosine synthase.